A 92-amino-acid chain; its full sequence is Small ribosomal subunit protein uS19 (92 aa).

The protein belongs to the universal ribosomal protein uS19 family.

Functionally, protein S19 forms a complex with S13 that binds strongly to the 16S ribosomal RNA. The polypeptide is Small ribosomal subunit protein uS19 (Pectobacterium atrosepticum (strain SCRI 1043 / ATCC BAA-672) (Erwinia carotovora subsp. atroseptica)).